We begin with the raw amino-acid sequence, 616 residues long: GDP-Man:Man(3)GlcNAc(2)-PP-Dol alpha-1,2-mannosyltransferase (616 aa).

Position 1 (methionine 1) is a topological domain, lumenal. Residues 2-21 traverse the membrane as a helical segment; sequence GYLVVIGVIACVAYGILQVV. Topologically, residues 22-199 are cytoplasmic; the sequence is STVLPRLLLV…RLIDGDYWKR (178 aa). The helical intramembrane region spans 200-220; the sequence is FTLIGQLFGSMVLSWEAMFEL. Residues 221 to 460 are Cytoplasmic-facing; it reads SPDVWIDTIG…FGLNAMWNEH (240 aa). An intramembrane region (helical) is located at residues 461 to 481; it reads FGIGVVEYMSRGVIPLCHASA. The Cytoplasmic segment spans residues 482-616; sequence GPLLDIVTNW…ERRSGIEKVY (135 aa).

The protein belongs to the glycosyltransferase group 1 family.

Its subcellular location is the endoplasmic reticulum membrane. The enzyme catalyses an alpha-D-Man-(1-&gt;3)-[alpha-D-Man-(1-&gt;6)]-beta-D-Man-(1-&gt;4)-beta-D-GlcNAc-(1-&gt;4)-alpha-D-GlcNAc-diphospho-di-trans,poly-cis-dolichol + 2 GDP-alpha-D-mannose = an alpha-D-Man-(1-&gt;2)-alpha-D-Man-(1-&gt;2)-alpha-D-Man-(1-&gt;3)-[alpha-D-Man-(1-&gt;6)]-beta-D-Man-(1-&gt;4)-beta-D-GlcNAc-(1-&gt;4)-alpha-D-GlcNAc-diphospho-di-trans,poly-cis-dolichol + 2 GDP + 2 H(+). Its pathway is protein modification; protein glycosylation. Functionally, GDP-Man:Man(3)GlcNAc(2)-PP-Dol alpha-1,2-mannosyltransferase that operates in the biosynthetic pathway of dolichol-linked oligosaccharides, the glycan precursors employed in protein asparagine (N)-glycosylation. The assembly of dolichol-linked oligosaccharides begins on the cytosolic side of the endoplasmic reticulum membrane and finishes in its lumen. The sequential addition of sugars to dolichol pyrophosphate produces dolichol-linked oligosaccharides containing fourteen sugars, including two GlcNAcs, nine mannoses and three glucoses. Once assembled, the oligosaccharide is transferred from the lipid to nascent proteins by oligosaccharyltransferases. Catalyzes, on the cytoplasmic face of the endoplasmic reticulum, the addition of the fourth and fifth mannose residues to the dolichol-linked oligosaccharide chain, to produce Man(5)GlcNAc(2)-PP-dolichol core oligosaccharide. The protein is GDP-Man:Man(3)GlcNAc(2)-PP-Dol alpha-1,2-mannosyltransferase (ALG11) of Debaryomyces hansenii (strain ATCC 36239 / CBS 767 / BCRC 21394 / JCM 1990 / NBRC 0083 / IGC 2968) (Yeast).